Reading from the N-terminus, the 459-residue chain is Bifunctional protein GlmU (459 aa).

The tract at residues 1 to 229 (MSNFAIXLAA…FDESLGVNDR (229 aa)) is pyrophosphorylase. Residues 8 to 11 (LAAG), K22, Q72, and 77 to 78 (GT) contribute to the UDP-N-acetyl-alpha-D-glucosamine site. Mg(2+) is bound at residue D102. UDP-N-acetyl-alpha-D-glucosamine-binding residues include G139, E154, N169, and N227. N227 contributes to the Mg(2+) binding site. Residues 230–250 (VALATAESVMRRRINHKHMVN) are linker. The N-acetyltransferase stretch occupies residues 251–459 (GVSFVNPEAT…TRLPHHPKNQ (209 aa)). Residues R332 and K350 each contribute to the UDP-N-acetyl-alpha-D-glucosamine site. H362 serves as the catalytic Proton acceptor. Positions 365 and 376 each coordinate UDP-N-acetyl-alpha-D-glucosamine. Residues A379, 385–386 (NY), S404, A422, and R439 each bind acetyl-CoA.

The protein in the N-terminal section; belongs to the N-acetylglucosamine-1-phosphate uridyltransferase family. It in the C-terminal section; belongs to the transferase hexapeptide repeat family. Homotrimer. The cofactor is Mg(2+).

It localises to the cytoplasm. It carries out the reaction alpha-D-glucosamine 1-phosphate + acetyl-CoA = N-acetyl-alpha-D-glucosamine 1-phosphate + CoA + H(+). The catalysed reaction is N-acetyl-alpha-D-glucosamine 1-phosphate + UTP + H(+) = UDP-N-acetyl-alpha-D-glucosamine + diphosphate. The protein operates within nucleotide-sugar biosynthesis; UDP-N-acetyl-alpha-D-glucosamine biosynthesis; N-acetyl-alpha-D-glucosamine 1-phosphate from alpha-D-glucosamine 6-phosphate (route II): step 2/2. It participates in nucleotide-sugar biosynthesis; UDP-N-acetyl-alpha-D-glucosamine biosynthesis; UDP-N-acetyl-alpha-D-glucosamine from N-acetyl-alpha-D-glucosamine 1-phosphate: step 1/1. Its pathway is bacterial outer membrane biogenesis; LPS lipid A biosynthesis. Its function is as follows. Catalyzes the last two sequential reactions in the de novo biosynthetic pathway for UDP-N-acetylglucosamine (UDP-GlcNAc). The C-terminal domain catalyzes the transfer of acetyl group from acetyl coenzyme A to glucosamine-1-phosphate (GlcN-1-P) to produce N-acetylglucosamine-1-phosphate (GlcNAc-1-P), which is converted into UDP-GlcNAc by the transfer of uridine 5-monophosphate (from uridine 5-triphosphate), a reaction catalyzed by the N-terminal domain. The chain is Bifunctional protein GlmU from Streptococcus pneumoniae serotype 19F (strain G54).